A 179-amino-acid polypeptide reads, in one-letter code: Insulin-like growth factor 2 (179 aa).

Positions methionine 1–alanine 24 are cleaved as a signal peptide. The segment at alanine 25–phenylalanine 52 is b. Disulfide bonds link cysteine 33-cysteine 71, cysteine 45-cysteine 84, and cysteine 70-cysteine 75. Residues serine 53–arginine 64 are c. The segment at glycine 65–alanine 85 is a. Residues threonine 86–glutamate 91 are d. The propeptide at arginine 92–aspartate 179 is e peptide. Threonine 106 carries an O-linked (GalNAc...) threonine glycan. A glycan (O-linked (GalNAc...) serine) is linked at serine 154. Positions alanine 160–aspartate 179 are disordered. Threonine 163 carries an O-linked (GalNAc...) threonine glycan.

Belongs to the insulin family. As to quaternary structure, interacts with MYORG; this interaction is required for IGF2 secretion. Interacts with integrins ITGAV:ITGB3 and ITGA6:ITGB4; integrin-binding is required for IGF2 signaling. Interacts with IGFBP2. Post-translationally, proteolytically processed by PCSK4, proIGF2 is cleaved at Arg-128 and Arg-92 to generate big-IGF2 and mature IGF2.

Its subcellular location is the secreted. Functionally, the insulin-like growth factors possess growth-promoting activity. Major fetal growth hormone in mammals. Plays a key role in regulating fetoplacental development. IGF2 is influenced by placental lactogen. Also involved in tissue differentiation. In adults, involved in glucose metabolism in adipose tissue, skeletal muscle and liver. Acts as a ligand for integrin which is required for IGF2 signaling. Positively regulates myogenic transcription factor MYOD1 function by facilitating the recruitment of transcriptional coactivators, thereby controlling muscle terminal differentiation. Inhibits myoblast differentiation and modulates metabolism via increasing the mitochondrial respiration rate. In terms of biological role, preptin undergoes glucose-mediated co-secretion with insulin, and acts as a physiological amplifier of glucose-mediated insulin secretion. Exhibits osteogenic properties by increasing osteoblast mitogenic activity through phosphoactivation of MAPK1 and MAPK3. The chain is Insulin-like growth factor 2 from Bos taurus (Bovine).